Reading from the N-terminus, the 211-residue chain is ATP phosphoribosyltransferase (211 aa).

Belongs to the ATP phosphoribosyltransferase family. Short subfamily. In terms of assembly, heteromultimer composed of HisG and HisZ subunits.

It is found in the cytoplasm. It catalyses the reaction 1-(5-phospho-beta-D-ribosyl)-ATP + diphosphate = 5-phospho-alpha-D-ribose 1-diphosphate + ATP. The protein operates within amino-acid biosynthesis; L-histidine biosynthesis; L-histidine from 5-phospho-alpha-D-ribose 1-diphosphate: step 1/9. Its function is as follows. Catalyzes the condensation of ATP and 5-phosphoribose 1-diphosphate to form N'-(5'-phosphoribosyl)-ATP (PR-ATP). Has a crucial role in the pathway because the rate of histidine biosynthesis seems to be controlled primarily by regulation of HisG enzymatic activity. In Sorangium cellulosum (strain So ce56) (Polyangium cellulosum (strain So ce56)), this protein is ATP phosphoribosyltransferase.